The primary structure comprises 365 residues: MDAYEYSELLKLLNTKLNNIKGILKPDILNKRLEEIKNEEASQDFWNDVENATKIGIEKNRILGKLNKFNKAFDSLTGTNELYEMATAEKDDETLEMLYEEASDLENLIKSTEISVMLSNPDDSSNAIVSIHPGAGGTESQDWASILYRMYLRWAERNDFKVELLDYQAGDEAGIKDVSFIIKGENAYGYMKAENGIHRLVRISPFDSNAKRHTSFSSVMVSPEIDDNINIVIEDKDIRIDTYRASGAGGQHVNKTESAIRITHIPTGIVVQCQNDRSQHKNKDSAFKMLKSRLYEYELEKQRASKDGIEKSDNGWGHQIRSYVLQPYQQVKDSRSNIGYSNVDAILDGDITKMIEDVLIATNTN.

The residue at position 251 (glutamine 251) is an N5-methylglutamine.

It belongs to the prokaryotic/mitochondrial release factor family. Post-translationally, methylated by PrmC. Methylation increases the termination efficiency of RF2.

It is found in the cytoplasm. Functionally, peptide chain release factor 2 directs the termination of translation in response to the peptide chain termination codons UGA and UAA. This is Peptide chain release factor 2 from Aliarcobacter butzleri (strain RM4018) (Arcobacter butzleri).